Consider the following 343-residue polypeptide: Putative dihydroflavonol 4-reductase (343 aa).

Y150 serves as a coordination point for NADP(+).

Belongs to the NAD(P)-dependent epimerase/dehydratase family. Dihydroflavonol-4-reductase subfamily.

The catalysed reaction is a (2R,3S,4S)-leucoanthocyanidin + NADP(+) = a (2R,3R)-dihydroflavonol + NADPH + H(+). It functions in the pathway secondary metabolite biosynthesis; flavonoid biosynthesis. The polypeptide is Putative dihydroflavonol 4-reductase (dfrA) (Synechocystis sp. (strain ATCC 27184 / PCC 6803 / Kazusa)).